A 300-amino-acid polypeptide reads, in one-letter code: ATP synthase gamma chain (300 aa).

The protein belongs to the ATPase gamma chain family. In terms of assembly, F-type ATPases have 2 components, CF(1) - the catalytic core - and CF(0) - the membrane proton channel. CF(1) has five subunits: alpha(3), beta(3), gamma(1), delta(1), epsilon(1). CF(0) has three main subunits: a, b and c.

It is found in the cell membrane. Its function is as follows. Produces ATP from ADP in the presence of a proton gradient across the membrane. The gamma chain is believed to be important in regulating ATPase activity and the flow of protons through the CF(0) complex. This Enterococcus hirae (strain ATCC 9790 / DSM 20160 / JCM 8729 / LMG 6399 / NBRC 3181 / NCIMB 6459 / NCDO 1258 / NCTC 12367 / WDCM 00089 / R) protein is ATP synthase gamma chain.